The following is a 188-amino-acid chain: GMP synthase [glutamine-hydrolyzing] subunit A (188 aa).

Residues 1–188 enclose the Glutamine amidotransferase type-1 domain; the sequence is MIVILDNGGQ…FCKVCGYKFE (188 aa). Cys76 (nucleophile) is an active-site residue. Residues His163 and Glu165 contribute to the active site.

In terms of assembly, heterodimer composed of a glutamine amidotransferase subunit (A) and a GMP-binding subunit (B).

It carries out the reaction XMP + L-glutamine + ATP + H2O = GMP + L-glutamate + AMP + diphosphate + 2 H(+). It participates in purine metabolism; GMP biosynthesis; GMP from XMP (L-Gln route): step 1/1. Functionally, catalyzes the synthesis of GMP from XMP. This Methanocaldococcus jannaschii (strain ATCC 43067 / DSM 2661 / JAL-1 / JCM 10045 / NBRC 100440) (Methanococcus jannaschii) protein is GMP synthase [glutamine-hydrolyzing] subunit A.